The chain runs to 271 residues: Glutamate racemase (271 aa).

Residues 10–11 and 42–43 contribute to the substrate site; these read DS and YG. The active-site Proton donor/acceptor is Cys-73. 74–75 lines the substrate pocket; sequence NS. Cys-183 serves as the catalytic Proton donor/acceptor. 184–185 contacts substrate; it reads TH.

This sequence belongs to the aspartate/glutamate racemases family.

The catalysed reaction is L-glutamate = D-glutamate. The protein operates within cell wall biogenesis; peptidoglycan biosynthesis. Provides the (R)-glutamate required for cell wall biosynthesis. This Saccharopolyspora erythraea (strain ATCC 11635 / DSM 40517 / JCM 4748 / NBRC 13426 / NCIMB 8594 / NRRL 2338) protein is Glutamate racemase.